The sequence spans 105 residues: MSTKNKKAAGGNGGAPKQTRQQSHDSQDYSSFKTVLFYCMLIVFLPVLTFFVLKGFVLDQFLDISEVKVNIASAVGAVVALHIALGLYIYRAYFGTTGSKASKTD.

Residues 1–26 (MSTKNKKAAGGNGGAPKQTRQQSHDS) form a disordered region. Residues 1–36 (MSTKNKKAAGGNGGAPKQTRQQSHDSQDYSSFKTVL) lie on the Cytoplasmic side of the membrane. The helical transmembrane segment at 37-57 (FYCMLIVFLPVLTFFVLKGFV) threads the bilayer. The Lumenal portion of the chain corresponds to 58-68 (LDQFLDISEVK). The helical transmembrane segment at 69–89 (VNIASAVGAVVALHIALGLYI) threads the bilayer. Residues 90 to 105 (YRAYFGTTGSKASKTD) are Cytoplasmic-facing.

It belongs to the VMA21 family.

Its subcellular location is the endoplasmic reticulum membrane. It is found in the endoplasmic reticulum-Golgi intermediate compartment membrane. It localises to the cytoplasmic vesicle. The protein localises to the COPII-coated vesicle membrane. Required for the assembly of the V0 complex of the vacuolar ATPase (V-ATPase) in the endoplasmic reticulum. This chain is Vacuolar ATPase assembly integral membrane protein VMA21 homolog, found in Drosophila erecta (Fruit fly).